Consider the following 4699-residue polypeptide: PKS-NRPS hybrid synthetase cheA (4699 aa).

Positions 1–21 are enriched in acidic residues; that stretch reads MSDNDDEWNGFSDDNGEDDGP. Disordered regions lie at residues 1–38 and 136–165; these read MSDNDDEWNGFSDDNGEDDGPPEPGRPSQIDGQPWDVP and DGWRFHSHPDPQHSVHNHGPSLHPSAHTQH. The span at 136 to 148 shows a compositional bias: basic and acidic residues; sequence DGWRFHSHPDPQH. Residues 172–520 form an N-terminal acylcarrier protein transacylase domain (SAT) region; that stretch reads SLDTIAELSN…VQQNVEEMAK (349 aa). Residues 625 to 836 are disordered; it reads PLPSVEDNVA…AGAPGARVTR (212 aa). Positions 674–688 are enriched in low complexity; that stretch reads TQGSQGSQGRRTPGS. Residues 724–737 show a composition bias toward basic residues; sequence PKRRGRPPGSKNKK. The 402-residue stretch at 737–1138 folds into the Ketosynthase family 3 (KS3) domain; that stretch reads KKDQAPAPAE…GANAHAILEA (402 aa). Over residues 764–777 the composition is skewed to low complexity; the sequence is ASAPRRGLRAAPAA. Positions 802–816 are enriched in polar residues; sequence ATASTPRAQSDQGTG. Residues cysteine 873, histidine 1012, and histidine 1058 each act as for beta-ketoacyl synthase activity in the active site. Residues 1250–1573 are malonyl-CoA:ACP transacylase (MAT) domain; the sequence is VFTGQGAQWP…VGTLLRQRDA (324 aa). Residues 1644 to 1777 form an N-terminal hotdog fold region; that stretch reads NELLGTRIMD…ANLIISLGEP (134 aa). In terms of domain architecture, PKS/mFAS DH spans 1644–1947; it reads NELLGTRIMD…TKPLVPPTPS (304 aa). Positions 1645-1941 are dehydratase (DH) domain; the sequence is ELLGTRIMDN…QLQGLHTKPL (297 aa). Histidine 1676 acts as the Proton acceptor; for dehydratase activity in catalysis. The tract at residues 1794–1947 is C-terminal hotdog fold; it reads MLDVPAERFY…TKPLVPPTPS (154 aa). Residue aspartate 1854 is the Proton donor; for dehydratase activity of the active site. The segment at 2050–2241 is methyltransferase (MT) domain; the sequence is LNRFYIEALG…RNTGFSGADE (192 aa). The tract at residues 2794–2967 is ketoreductase (KR) domain; the sequence is TYWLVGLTGG…PAAAVNIGAV (174 aa). A Carrier 1 domain is found at 3076 to 3153; that stretch reads DASEILEDAY…ALFELVKERA (78 aa). At serine 3113 the chain carries O-(pantetheine 4'-phosphoryl)serine. Positions 3164–3265 are disordered; that stretch reads EQPDQVKSPR…PVASSPDAGL (102 aa). Composition is skewed to polar residues over residues 3200–3209 and 3218–3233; these read SLDQGSSWDS and GHDSTILSSTAPSSPI. Residues 3268–3696 are condensation (C) domain; sequence SVPLSFSQAR…PISRISKPPL (429 aa). The adenylation (A) domain stretch occupies residues 3730–4113; that stretch reads IQAHPDKLAL…GGLILEGRID (384 aa). One can recognise a Carrier 2 domain in the interval 4236–4316; sequence EGLPAMQHLI…TMAALVASGS (81 aa). The thiolation and peptide carrier (T) domain stretch occupies residues 4241–4313; sequence MQHLIKQLWE…TLETMAALVA (73 aa). O-(pantetheine 4'-phosphoryl)serine is present on serine 4276. The interval 4367-4598 is reductase (R) domain; that stretch reads LTGSTGFLGR…ISVHTVAAAI (232 aa).

This sequence in the C-terminal section; belongs to the NRP synthetase family.

It functions in the pathway secondary metabolite biosynthesis. PKS-NRPS hybrid synthetase; part of the gene cluster that mediates the biosynthesis of chaetoglobosin A which has a unique inhibitory activity against actin polymerization in mammalian cells. Chaetoglobosin A and its intermediates are involved in the morphological differentiation of C.globosum. The first step of the pathway is the synthesis of prochaetoglobosin I via condensation of one acetyl-CoA, 8 malonyl-CoA, and a L-tryptophan molecule by the PKS-NRPS hybrid synthetase cheA, followed by reduction of backbone double bond to install desired geometry by the enoyl reductase cheB. Further multiple oxidation steps performed by the cytochrome P450 monooxygenases cheE and cheG, as well as by the FAD-linked oxidoreductase cheF, lead to the formation of chaetoglobosin A. Depending on the order of action of these reductases, distinct intermediates can be identified. Within the pathway, the cytochrome P450 monooxygenase cheE catalyzes a stereospecific epoxidation on prochaetoglobosin I, cytoglobosin D, and chaetoglobosin J intermediates. The FAD-linked oxidoreductase cheF performs dehydrogenation of the C-20 hydroxyl groups in the 20-dihyrochaetoglobosin A and cytoglobosin D intermediates. Finally, the cytochrome P450 monooxygenase cheG can catalyze the stereospecific dihydroxylation of prochaetoglobosin I and prochaetoglobosin IV at C-19 and C-20, respectively. The Diels-Alderase cheD may play a role in the post-PKS-NRPS biosynthetic steps catalyzing Diels-Alder cyclization. The chain is PKS-NRPS hybrid synthetase cheA from Chaetomium globosum (strain ATCC 6205 / CBS 148.51 / DSM 1962 / NBRC 6347 / NRRL 1970) (Soil fungus).